The chain runs to 380 residues: Glucose-1-phosphate adenylyltransferase (380 aa).

Residues Tyr-100, Gly-165, 180 to 181 (EK), and Ser-191 contribute to the alpha-D-glucose 1-phosphate site.

This sequence belongs to the bacterial/plant glucose-1-phosphate adenylyltransferase family. Homotetramer.

It carries out the reaction alpha-D-glucose 1-phosphate + ATP + H(+) = ADP-alpha-D-glucose + diphosphate. Its pathway is glycan biosynthesis; glycogen biosynthesis. Involved in the biosynthesis of ADP-glucose, a building block required for the elongation reactions to produce glycogen. Catalyzes the reaction between ATP and alpha-D-glucose 1-phosphate (G1P) to produce pyrophosphate and ADP-Glc. This chain is Glucose-1-phosphate adenylyltransferase, found in Clostridium acetobutylicum (strain ATCC 824 / DSM 792 / JCM 1419 / IAM 19013 / LMG 5710 / NBRC 13948 / NRRL B-527 / VKM B-1787 / 2291 / W).